Consider the following 279-residue polypeptide: Ribosomal RNA small subunit methyltransferase A (279 aa).

Residues Asn25, Leu27, Gly52, Glu73, Asp98, and Asn120 each contribute to the S-adenosyl-L-methionine site.

It belongs to the class I-like SAM-binding methyltransferase superfamily. rRNA adenine N(6)-methyltransferase family. RsmA subfamily.

It is found in the cytoplasm. The enzyme catalyses adenosine(1518)/adenosine(1519) in 16S rRNA + 4 S-adenosyl-L-methionine = N(6)-dimethyladenosine(1518)/N(6)-dimethyladenosine(1519) in 16S rRNA + 4 S-adenosyl-L-homocysteine + 4 H(+). In terms of biological role, specifically dimethylates two adjacent adenosines (A1518 and A1519) in the loop of a conserved hairpin near the 3'-end of 16S rRNA in the 30S particle. May play a critical role in biogenesis of 30S subunits. The polypeptide is Ribosomal RNA small subunit methyltransferase A (Magnetococcus marinus (strain ATCC BAA-1437 / JCM 17883 / MC-1)).